Reading from the N-terminus, the 644-residue chain is uncharacterized protein (644 aa).

Residues 123 to 644 (VSQQIQHDQH…AVGKKKPTKK (522 aa)) form a disordered region. A compositionally biased stretch (low complexity) spans 133–155 (PQYNKHPQNNHHPQNTQHSQNNP). Residues 159-174 (NINESENKEDLSDRSS) show a composition bias toward basic and acidic residues. Residues 175 to 191 (DSANSEESHNSQYSQDS) are compositionally biased toward polar residues. The span at 192-204 (GDSRNYQDSEDNK) shows a compositional bias: basic and acidic residues. Residues 216–233 (NKLIVQRLTNPKITPDTI) are compositionally biased toward polar residues. Basic and acidic residues-rich tracts occupy residues 236–249 (SNKD…KDLS) and 256–279 (SIKD…KSKE). 2 stretches are compositionally biased toward acidic residues: residues 292-301 (DGDDLDDLGN) and 310-338 (SDYE…DDSN). The segment covering 367 to 400 (KSPSNSKKSKTNQKLSQSSKKISSKTITNSGSKS) has biased composition (low complexity). Over residues 447–476 (SDDSDNESDNESDNESNNDSDNETDSEIDD) the composition is skewed to acidic residues. Residues 496-531 (PKTPMKPNNKTTSVSKPVSKPPVKSSIKNNTKNNKP) show a composition bias toward low complexity. The span at 544 to 558 (KQKDQSESQSDKDID) shows a compositional bias: basic and acidic residues. Low complexity predominate over residues 585-594 (PPKSVSLPSS). Residues 607–630 (TAKTQNKSKSQPKTNGSKTSTKSI) show a composition bias toward polar residues.

This is an uncharacterized protein from Acanthamoeba polyphaga mimivirus (APMV).